Reading from the N-terminus, the 244-residue chain is rRNA adenine N-6-methyltransferase (244 aa).

6 residues coordinate S-adenosyl-L-methionine: Asn-11, Ile-13, Gly-38, Glu-59, Asp-84, and Asn-101.

This sequence belongs to the class I-like SAM-binding methyltransferase superfamily. rRNA adenine N(6)-methyltransferase family.

The catalysed reaction is adenosine(2085) in 23S rRNA + 2 S-adenosyl-L-methionine = N(6)-dimethyladenosine(2085) in 23S rRNA + 2 S-adenosyl-L-homocysteine + 2 H(+). Functionally, this protein produces a dimethylation of the adenine residue at position 2085 in 23S rRNA, resulting in reduced affinity between ribosomes and macrolide-lincosamide-streptogramin B antibiotics. This chain is rRNA adenine N-6-methyltransferase (ermC), found in Staphylococcus aureus.